The primary structure comprises 277 residues: Shikimate dehydrogenase (NADP(+)) (277 aa).

Residues 15-17 (SLS) and Thr-62 contribute to the shikimate site. Lys-66 serves as the catalytic Proton acceptor. Residues Asn-87 and Asp-102 each coordinate shikimate. Residues 127–131 (GAGGA), 151–156 (NRTVDK), and Ile-219 contribute to the NADP(+) site. Tyr-221 provides a ligand contact to shikimate. Gly-242 is an NADP(+) binding site.

The protein belongs to the shikimate dehydrogenase family. As to quaternary structure, homodimer.

The enzyme catalyses shikimate + NADP(+) = 3-dehydroshikimate + NADPH + H(+). The protein operates within metabolic intermediate biosynthesis; chorismate biosynthesis; chorismate from D-erythrose 4-phosphate and phosphoenolpyruvate: step 4/7. In terms of biological role, involved in the biosynthesis of the chorismate, which leads to the biosynthesis of aromatic amino acids. Catalyzes the reversible NADPH linked reduction of 3-dehydroshikimate (DHSA) to yield shikimate (SA). This is Shikimate dehydrogenase (NADP(+)) from Bacillus cereus (strain AH187).